Consider the following 314-residue polypeptide: Small ribosomal subunit biogenesis GTPase RsgA (314 aa).

A disordered region spans residues 1 to 21 (MKRAPTKQPAKPAARGGERAQ). Residues 85–246 (SDQFKSKLFA…LIDSPGFQEF (162 aa)) enclose the CP-type G domain. GTP-binding positions include 134 to 137 (NKID) and 188 to 196 (GQSGMGKST). Zn(2+) contacts are provided by cysteine 270, cysteine 275, histidine 277, and cysteine 283.

It belongs to the TRAFAC class YlqF/YawG GTPase family. RsgA subfamily. In terms of assembly, monomer. Associates with 30S ribosomal subunit, binds 16S rRNA. The cofactor is Zn(2+).

Its subcellular location is the cytoplasm. Its function is as follows. One of several proteins that assist in the late maturation steps of the functional core of the 30S ribosomal subunit. Helps release RbfA from mature subunits. May play a role in the assembly of ribosomal proteins into the subunit. Circularly permuted GTPase that catalyzes slow GTP hydrolysis, GTPase activity is stimulated by the 30S ribosomal subunit. This is Small ribosomal subunit biogenesis GTPase RsgA from Burkholderia mallei (strain ATCC 23344).